The chain runs to 149 residues: MISNFLKSNNIKNNSPFRSFCTRYSESHEWIKFNHRNKTCTLGITKYASDQLKSIVNINLPDLNSTITRKQPFGNIESTKTVADLFSDVDGKAVLLNSDVIVDPTIVSHSPEDKGWLIKMESNDFESFNKMMTKSEYGQFLKDINKSNV.

One can recognise a Lipoyl-binding domain in the interval 39-121 (TCTLGITKYA…EDKGWLIKME (83 aa)). Residue Lys80 is modified to N6-lipoyllysine.

This sequence belongs to the GcvH family. In terms of assembly, the glycine cleavage system is composed of four proteins: P, T, L and H. (R)-lipoate is required as a cofactor.

In terms of biological role, the glycine cleavage system catalyzes the degradation of glycine. The H protein shuttles the methylamine group of glycine from the P protein to the T protein. The chain is Putative glycine cleavage system H protein 3 (gcvH3) from Dictyostelium discoideum (Social amoeba).